The following is a 313-amino-acid chain: PDCD10 and GCKIII kinases-associated protein 1 (313 aa).

The disordered stretch occupies residues 42–95 (KGTQNSEVEVPGSTLHSGSLSKPDSSGSTTGLPCQGSLTQEDSEERPCVEKHGI). A compositionally biased stretch (low complexity) spans 58 to 69 (SGSLSKPDSSGS). Serine 60 is modified (phosphoserine). The segment covering 70–81 (TTGLPCQGSLTQ) has biased composition (polar residues). A Phosphothreonine modification is found at threonine 104. Phosphoserine occurs at positions 107, 237, and 240. The interval 253 to 288 (YFKEEDPTQPTPVADPGNEREDPHTYNGNKEGAVVD) is disordered.

In terms of assembly, interacts with KEAP1; this interaction prevents the ubiquitination of KEAP1 by TRIM25, thus protecting KEAP1 from degradation. Found in association with PDCD10 and members of the STE20 kinases, such as STK24, STK25, and STK26.

It is found in the cell membrane. Acts as a tumor suppressor. Acts as a tumor suppressor for colorectal cancer cell proliferation by targeting KEAP1/USP17/ELK1/CDK6 axis. The polypeptide is PDCD10 and GCKIII kinases-associated protein 1 (Rattus norvegicus (Rat)).